We begin with the raw amino-acid sequence, 540 residues long: NADH-quinone oxidoreductase subunit N 1 (540 aa).

Transmembrane regions (helical) follow at residues 11 to 31, 52 to 72, 109 to 129, 142 to 162, 195 to 215, 250 to 270, 284 to 306, 324 to 344, 352 to 372, 386 to 406, 431 to 451, 464 to 486, and 508 to 528; these read ILPELMLLLLGLLVLGSDVLT, AVGLGLVFIVGLVQSRFLFTV, FTMIARLTFIGAAFLTTLLAM, ALLIFSTLGMSIMAAATEFIL, FLFGSLSSAIFLYGISLTYGF, LILGMLFIIAGLGYKISVVPF, PVTAFLSTASKAAGFLLLYRLLT, WTSILAILALVTVIVGNLAAL, LLAYSSIGHAGFLLLAVLLWA, LIYYLIVYSLTNLGSFGVLAV, LMMTILILSLAGIPPLAGFWA, AVPLVTIAVIMTVVSLYYYLRFL, and AAIILSTVLVVLLGLLPNLIW.

The protein belongs to the complex I subunit 2 family. As to quaternary structure, NDH-1 is composed of 14 different subunits. Subunits NuoA, H, J, K, L, M, N constitute the membrane sector of the complex.

It localises to the cell membrane. It catalyses the reaction a quinone + NADH + 5 H(+)(in) = a quinol + NAD(+) + 4 H(+)(out). Its function is as follows. NDH-1 shuttles electrons from NADH, via FMN and iron-sulfur (Fe-S) centers, to quinones in the respiratory chain. The immediate electron acceptor for the enzyme in this species is believed to be ubiquinone. Couples the redox reaction to proton translocation (for every two electrons transferred, four hydrogen ions are translocated across the cytoplasmic membrane), and thus conserves the redox energy in a proton gradient. This chain is NADH-quinone oxidoreductase subunit N 1, found in Roseiflexus castenholzii (strain DSM 13941 / HLO8).